We begin with the raw amino-acid sequence, 179 residues long: IMPACT family member in pol 5'region (179 aa).

It belongs to the IMPACT family.

This chain is IMPACT family member in pol 5'region, found in Thermus thermophilus.